We begin with the raw amino-acid sequence, 101 residues long: NAD(P)H-quinone oxidoreductase subunit 4L, chloroplastic (101 aa).

Helical transmembrane passes span 2 to 22 (MLEHVLVLSAYLFSVGLYGLI), 32 to 52 (MCLELILNAVNLNFVTFSDFF), and 61 to 81 (IFSIFVIAIAAAEAAIGLAIV).

It belongs to the complex I subunit 4L family. As to quaternary structure, NDH is composed of at least 16 different subunits, 5 of which are encoded in the nucleus.

The protein localises to the plastid. It localises to the chloroplast thylakoid membrane. The catalysed reaction is a plastoquinone + NADH + (n+1) H(+)(in) = a plastoquinol + NAD(+) + n H(+)(out). It catalyses the reaction a plastoquinone + NADPH + (n+1) H(+)(in) = a plastoquinol + NADP(+) + n H(+)(out). NDH shuttles electrons from NAD(P)H:plastoquinone, via FMN and iron-sulfur (Fe-S) centers, to quinones in the photosynthetic chain and possibly in a chloroplast respiratory chain. The immediate electron acceptor for the enzyme in this species is believed to be plastoquinone. Couples the redox reaction to proton translocation, and thus conserves the redox energy in a proton gradient. This chain is NAD(P)H-quinone oxidoreductase subunit 4L, chloroplastic, found in Helianthus annuus (Common sunflower).